A 102-amino-acid polypeptide reads, in one-letter code: Fe-S protein maturation auxiliary factor YitW (102 aa).

The protein belongs to the MIP18 family.

Functionally, involved in the maturation of iron-sulfur (Fe-S) proteins. May function as a Fe-S cluster carrier. The protein is Fe-S protein maturation auxiliary factor YitW (yitW) of Bacillus subtilis (strain 168).